The primary structure comprises 189 residues: Transcription factor FapR (189 aa).

Belongs to the FapR family.

Functionally, transcriptional factor involved in regulation of membrane lipid biosynthesis by repressing genes involved in fatty acid and phospholipid metabolism. The sequence is that of Transcription factor FapR from Listeria monocytogenes serotype 4b (strain CLIP80459).